We begin with the raw amino-acid sequence, 356 residues long: Vesicular integral-membrane protein VIP36 (356 aa).

Residues 1 to 44 (MAAEGWIWRWGWGRRCLGRPGLPGPGPGPATPLFLLLLLGPVVA) form the signal peptide. At 45 to 322 (DITDGNSEHL…FRSGPLTGWR (278 aa)) the chain is on the lumenal side. The 225-residue stretch at 52–276 (EHLKREHSLI…DIISMKLFQL (225 aa)) folds into the L-type lectin-like domain. Residues Ser-96 and Asp-131 each contribute to the a carbohydrate site. 3 residues coordinate Ca(2+): Asp-162, Tyr-164, and Asn-166. A carbohydrate is bound at residue 164 to 166 (YPN). Asn-183 carries an N-linked (GlcNAc...) asparagine glycan. Residue His-190 coordinates a carbohydrate. Ca(2+) is bound at residue Asp-193. Cys-202 and Cys-239 are joined by a disulfide. 260–262 (GDL) serves as a coordination point for a carbohydrate. Residues 323–345 (VFLLLLCALLGIIVCAVVGAVVF) traverse the membrane as a helical segment. Residues 346–356 (QKRQERNKRFY) lie on the Cytoplasmic side of the membrane.

As to quaternary structure, monomer. It depends on Ca(2+) as a cofactor. Expressed in kidney, liver, intestine, lung, spleen and heart. Low expression in brain.

It localises to the golgi apparatus membrane. Plays a role as an intracellular lectin in the early secretory pathway. Interacts with N-acetyl-D-galactosamine and high-mannose type glycans and may also bind to O-linked glycans. Involved in the transport and sorting of glycoproteins carrying high mannose-type glycans. The protein is Vesicular integral-membrane protein VIP36 (LMAN2) of Canis lupus familiaris (Dog).